Reading from the N-terminus, the 179-residue chain is NADH dehydrogenase [ubiquinone] 1 beta subcomplex subunit 9 (179 aa).

An N-acetylalanine modification is found at Ala-2. At Ser-85 the chain carries Phosphoserine. The disordered stretch occupies residues 136-162 (EVKQLQEETPPGGPLTEALPPARKEGD).

The protein belongs to the complex I LYR family. In terms of assembly, mammalian complex I is composed of 45 different subunits.

The protein resides in the mitochondrion inner membrane. Its function is as follows. Accessory subunit of the mitochondrial membrane respiratory chain NADH dehydrogenase (Complex I), that is believed to be not involved in catalysis. Complex I functions in the transfer of electrons from NADH to the respiratory chain. The immediate electron acceptor for the enzyme is believed to be ubiquinone. This is NADH dehydrogenase [ubiquinone] 1 beta subcomplex subunit 9 (NDUFB9) from Homo sapiens (Human).